The following is a 153-amino-acid chain: Large ribosomal subunit protein uL15 (153 aa).

Residues 21–41 (RGIGSGKGKTGGRGIKGQKSR) are disordered. Over residues 23-35 (IGSGKGKTGGRGI) the composition is skewed to gly residues.

The protein belongs to the universal ribosomal protein uL15 family. In terms of assembly, part of the 50S ribosomal subunit.

Binds to the 23S rRNA. This Rickettsia massiliae (strain Mtu5) protein is Large ribosomal subunit protein uL15.